The chain runs to 501 residues: Glycerol kinase 1 (501 aa).

Position 16 (Thr16) interacts with ADP. Positions 16, 17, and 18 each coordinate ATP. Thr16 contributes to the sn-glycerol 3-phosphate binding site. Arg20 contacts ADP. The sn-glycerol 3-phosphate site is built by Arg84, Glu85, Tyr135, and Asp242. Positions 84, 85, 135, 242, and 243 each coordinate glycerol. Residues Thr264 and Gly307 each coordinate ADP. Thr264, Gly307, Gln311, and Gly408 together coordinate ATP. Gly408 lines the ADP pocket.

It belongs to the FGGY kinase family.

The catalysed reaction is glycerol + ATP = sn-glycerol 3-phosphate + ADP + H(+). It participates in polyol metabolism; glycerol degradation via glycerol kinase pathway; sn-glycerol 3-phosphate from glycerol: step 1/1. In terms of biological role, key enzyme in the regulation of glycerol uptake and metabolism. Catalyzes the phosphorylation of glycerol to yield sn-glycerol 3-phosphate. The polypeptide is Glycerol kinase 1 (Saccharolobus solfataricus (strain ATCC 35092 / DSM 1617 / JCM 11322 / P2) (Sulfolobus solfataricus)).